The primary structure comprises 78 residues: Small ribosomal subunit protein bS18B (78 aa).

Positions 1 to 22 (MPRKPVRKVASTPRPNPLDQNG) are disordered.

Belongs to the bacterial ribosomal protein bS18 family. Part of the 30S ribosomal subunit. Forms a tight heterodimer with protein bS6.

Binds as a heterodimer with protein bS6 to the central domain of the 16S rRNA, where it helps stabilize the platform of the 30S subunit. The polypeptide is Small ribosomal subunit protein bS18B (Streptomyces avermitilis (strain ATCC 31267 / DSM 46492 / JCM 5070 / NBRC 14893 / NCIMB 12804 / NRRL 8165 / MA-4680)).